Consider the following 375-residue polypeptide: Odorant receptor 10 (375 aa).

Transmembrane regions (helical) follow at residues 32–52 (ISII…GHSW), 58–78 (VIIK…TLIL), 125–145 (NLAL…FTGV), 167–187 (IIYL…IPFT), 250–270 (YICF…LFLL), and 279–299 (IVIV…FYWH).

Belongs to the insect chemoreceptor superfamily. Heteromeric odorant receptor channel (TC 1.A.69) family. In terms of tissue distribution, expressed in female antenna, maxillary palp and proboscis. Expressed in female body. Expressed in male tissues.

The protein localises to the cell membrane. Its function is as follows. Odorant receptor which complexes with Orco, a coreceptor, to form odorant-sensing units, providing sensitive and prolonged odorant signaling and calcium permeability. Can sense indole, 1-octen-3-ol, 3-methyindole and an insect repellent DEET. The protein is Odorant receptor 10 of Aedes albopictus (Asian tiger mosquito).